The sequence spans 424 residues: Histidinol dehydrogenase (424 aa).

NAD(+) contacts are provided by Tyr121, Gln183, and Asn206. The substrate site is built by Ser229, Gln251, and His254. Gln251 and His254 together coordinate Zn(2+). Catalysis depends on proton acceptor residues Glu319 and His320. Substrate is bound by residues His320, Asp353, Glu407, and His412. Asp353 is a Zn(2+) binding site. Position 412 (His412) interacts with Zn(2+).

Belongs to the histidinol dehydrogenase family. Requires Zn(2+) as cofactor.

The catalysed reaction is L-histidinol + 2 NAD(+) + H2O = L-histidine + 2 NADH + 3 H(+). It functions in the pathway amino-acid biosynthesis; L-histidine biosynthesis; L-histidine from 5-phospho-alpha-D-ribose 1-diphosphate: step 9/9. In terms of biological role, catalyzes the sequential NAD-dependent oxidations of L-histidinol to L-histidinaldehyde and then to L-histidine. The chain is Histidinol dehydrogenase from Geobacillus kaustophilus (strain HTA426).